The chain runs to 278 residues: Phosphatidylglycerol--prolipoprotein diacylglyceryl transferase (278 aa).

Transmembrane regions (helical) follow at residues 21–41, 54–74, and 88–108; these read WYGIIIAAGILLGYFIAQASV, IIFWSAIFGFIVARIYFVIFQ, and IWHGGIAIHGGLIGGFVTGII. Residue R136 coordinates a 1,2-diacyl-sn-glycero-3-phospho-(1'-sn-glycerol). The next 2 membrane-spanning stretches (helical) occupy residues 176–196 and 234–254; these read QPTFLYESLWDILGFVILILL and IRVAQLMSIILILIGVIIMII.

Belongs to the Lgt family.

Its subcellular location is the cell membrane. The catalysed reaction is L-cysteinyl-[prolipoprotein] + a 1,2-diacyl-sn-glycero-3-phospho-(1'-sn-glycerol) = an S-1,2-diacyl-sn-glyceryl-L-cysteinyl-[prolipoprotein] + sn-glycerol 1-phosphate + H(+). It participates in protein modification; lipoprotein biosynthesis (diacylglyceryl transfer). In terms of biological role, catalyzes the transfer of the diacylglyceryl group from phosphatidylglycerol to the sulfhydryl group of the N-terminal cysteine of a prolipoprotein, the first step in the formation of mature lipoproteins. This Staphylococcus xylosus protein is Phosphatidylglycerol--prolipoprotein diacylglyceryl transferase.